Reading from the N-terminus, the 687-residue chain is Protein 4.2 (687 aa).

A lipid anchor (N-myristoyl glycine) is attached at glycine 2. Positions 31–39 are band 3 binding; it reads LFVRRGQPF. Serine 247 bears the Phosphoserine mark.

Belongs to the transglutaminase superfamily. Transglutaminase family. In terms of assembly, component of the ankyrin-1 complex in the erythrocyte, composed of ANK1, RHCE, RHAG, SLC4A1, EPB42, GYPA, GYPB and AQP1. Interacts with SLC4A1 (via the cytoplasmic domain); this interaction is mediated by the SLC4A1 Band 3-I dimer. Interacts with ANK1 (via ANK 1-13 repeats). Interacts with AQP1 (via the C-terminal).

The protein localises to the cell membrane. The protein resides in the cytoplasm. It is found in the cytoskeleton. Its function is as follows. Component of the ankyrin-1 complex, a multiprotein complex involved in the stability and shape of the erythrocyte membrane. In Bos taurus (Bovine), this protein is Protein 4.2.